We begin with the raw amino-acid sequence, 101 residues long: Small ribosomal subunit protein uS14 (101 aa).

The protein belongs to the universal ribosomal protein uS14 family. As to quaternary structure, part of the 30S ribosomal subunit. Contacts proteins S3 and S10.

Binds 16S rRNA, required for the assembly of 30S particles and may also be responsible for determining the conformation of the 16S rRNA at the A site. This chain is Small ribosomal subunit protein uS14, found in Methylococcus capsulatus (strain ATCC 33009 / NCIMB 11132 / Bath).